The primary structure comprises 201 residues: Small ribosomal subunit protein uS4c (201 aa).

The S4 RNA-binding domain maps to 91-153; the sequence is MRLDNIVFRL…NASKKIVETN (63 aa).

It belongs to the universal ribosomal protein uS4 family. In terms of assembly, part of the 30S ribosomal subunit. Contacts protein S5. The interaction surface between S4 and S5 is involved in control of translational fidelity.

Its subcellular location is the plastid. It is found in the cyanelle. One of the primary rRNA binding proteins, it binds directly to 16S rRNA where it nucleates assembly of the body of the 30S subunit. Functionally, with S5 and S12 plays an important role in translational accuracy. This chain is Small ribosomal subunit protein uS4c (rps4), found in Cyanophora paradoxa.